The following is a 378-amino-acid chain: CST complex subunit STN1 (378 aa).

The tract at residues methionine 8–proline 195 is interaction with CTC1. The segment at residues valine 64–valine 165 is a DNA-binding region (OB). 2 winged helix-turn-helix (wHTH) regions span residues glutamate 201–threonine 305 and lysine 306–phenylalanine 378.

The protein belongs to the STN1 family. Component of the CST complex, composed of TEN1/C17orf106, CTC1/C17orf68 and STN1; in the complex interacts directly with TEN1 and CTC1. Interacts with ACD/TPP1. Interacts with POT1 and POLA1.

The protein localises to the nucleus. The protein resides in the chromosome. Its subcellular location is the telomere. Functionally, component of the CST complex proposed to act as a specialized replication factor promoting DNA replication under conditions of replication stress or natural replication barriers such as the telomere duplex. The CST complex binds single-stranded DNA with high affinity in a sequence-independent manner, while isolated subunits bind DNA with low affinity by themselves. Initially the CST complex has been proposed to protect telomeres from DNA degradation. However, the CST complex has been shown to be involved in several aspects of telomere replication. The CST complex inhibits telomerase and is involved in telomere length homeostasis; it is proposed to bind to newly telomerase-synthesized 3' overhangs and to terminate telomerase action implicating the association with the ACD:POT1 complex thus interfering with its telomerase stimulation activity. The CST complex is also proposed to be involved in fill-in synthesis of the telomeric C-strand probably implicating recruitment and activation of DNA polymerase alpha. The CST complex facilitates recovery from many forms of exogenous DNA damage; seems to be involved in the re-initiation of DNA replication at repaired forks and/or dormant origins. Required for efficicient replication of the duplex region of the telomere. Promotes efficient replication of lagging-strand telomeres. Promotes general replication start following replication-fork stalling implicating new origin firing. May be in involved in C-strand fill-in during late S/G2 phase independent of its role in telomere duplex replication. The protein is CST complex subunit STN1 of Mus musculus (Mouse).